The sequence spans 563 residues: Mitochondrial distribution and morphology protein 34 (563 aa).

An SMP-LTD domain is found at 1–195 (MAFNFNWSPL…LPAIIHRLSL (195 aa)). 2 disordered regions span residues 298–460 (ERGD…QIPT) and 535–563 (RHDKTAREGFWSTSSNGDDAPPAYEPKAL). 2 stretches are compositionally biased toward polar residues: residues 303-332 (AGTTTPATTSLHRPQSSLGGQSTTYTFSNR) and 346-357 (SLVNMNSATTGL). A compositionally biased stretch (basic residues) spans 365 to 383 (SRSHTTRKKKNRVVNLRKS). 2 stretches are compositionally biased toward polar residues: residues 386–402 (TDNVSESGESETASITA) and 444–460 (PSRSITPEQGNMNQIPT).

This sequence belongs to the MDM34 family. Component of the ER-mitochondria encounter structure (ERMES) or MDM complex, composed of mmm1, mdm10, mdm12 and mdm34.

The protein localises to the mitochondrion outer membrane. Functionally, component of the ERMES/MDM complex, which serves as a molecular tether to connect the endoplasmic reticulum (ER) and mitochondria. Components of this complex are involved in the control of mitochondrial shape and protein biogenesis, and function in nonvesicular lipid trafficking between the ER and mitochondria. Mdm34 is required for the interaction of the ER-resident membrane protein mmm1 and the outer mitochondrial membrane-resident beta-barrel protein mdm10. The sequence is that of Mitochondrial distribution and morphology protein 34 from Sclerotinia sclerotiorum (strain ATCC 18683 / 1980 / Ss-1) (White mold).